The primary structure comprises 603 residues: ATP-dependent lipid A-core flippase (603 aa).

4 helical membrane-spanning segments follow: residues 20–40 (LGYV…FLIF), 79–99 (LVYA…LGSF), 170–190 (VFLF…MLAI), and 269–289 (PMLQ…VLWL). Residues 31–324 (LLSIVGFLIF…LSEVSSTVQR (294 aa)) form the ABC transmembrane type-1 domain. The ABC transporter domain maps to 356–592 (LEVRNLSFRY…NGHYARLHAM (237 aa)). Position 390-397 (390-397 (GRSGSGKS)) interacts with ATP.

This sequence belongs to the ABC transporter superfamily. Lipid exporter (TC 3.A.1.106) family. In terms of assembly, homodimer.

It localises to the cell inner membrane. The catalysed reaction is ATP + H2O + lipid A-core oligosaccharideSide 1 = ADP + phosphate + lipid A-core oligosaccharideSide 2.. Functionally, involved in lipopolysaccharide (LPS) biosynthesis. Translocates lipid A-core from the inner to the outer leaflet of the inner membrane. Transmembrane domains (TMD) form a pore in the inner membrane and the ATP-binding domain (NBD) is responsible for energy generation. The polypeptide is ATP-dependent lipid A-core flippase (Pseudomonas aeruginosa (strain ATCC 15692 / DSM 22644 / CIP 104116 / JCM 14847 / LMG 12228 / 1C / PRS 101 / PAO1)).